Here is a 411-residue protein sequence, read N- to C-terminus: Ferrochelatase, mitochondrial (411 aa).

The N-terminal 41 residues, 1–41, are a transit peptide targeting the mitochondrion; it reads MAAFRAAHRLLGHILRNESSAGLVTQRWSSSAAVASVPKSS. A disordered region spans residues 34-55; that stretch reads VASVPKSSDPKPHAQPDKRKPK. The span at 41–51 shows a compositional bias: basic and acidic residues; that stretch reads SDPKPHAQPDK. The protoporphyrin IX site is built by Arg102, Tyr110, and Ser117. Residue Cys183 coordinates [2Fe-2S] cluster. Residues His217 and Asp370 contribute to the active site. [2Fe-2S] cluster is bound by residues Cys390, Cys393, and Cys398.

The protein belongs to the ferrochelatase family. As to quaternary structure, homodimer. Homotetramer. [2Fe-2S] cluster is required as a cofactor.

The protein resides in the mitochondrion inner membrane. The enzyme catalyses heme b + 2 H(+) = protoporphyrin IX + Fe(2+). It functions in the pathway porphyrin-containing compound metabolism; protoheme biosynthesis; protoheme from protoporphyrin-IX: step 1/1. In terms of biological role, catalyzes the ferrous insertion into protoporphyrin IX. The polypeptide is Ferrochelatase, mitochondrial (Xenopus laevis (African clawed frog)).